A 174-amino-acid polypeptide reads, in one-letter code: Acetolactate synthase small subunit (174 aa).

The 75-residue stretch at 4–78 (TLSVLVQDEA…NILNVQDVTN (75 aa)) folds into the ACT domain.

It belongs to the acetolactate synthase small subunit family. Dimer of large and small chains.

It is found in the plastid. It localises to the chloroplast. It carries out the reaction 2 pyruvate + H(+) = (2S)-2-acetolactate + CO2. The protein operates within amino-acid biosynthesis; L-isoleucine biosynthesis; L-isoleucine from 2-oxobutanoate: step 1/4. It participates in amino-acid biosynthesis; L-valine biosynthesis; L-valine from pyruvate: step 1/4. In Pyropia yezoensis (Susabi-nori), this protein is Acetolactate synthase small subunit (ilvH).